The chain runs to 212 residues: V-type ATP synthase subunit E (212 aa).

This sequence belongs to the V-ATPase E subunit family.

In terms of biological role, produces ATP from ADP in the presence of a proton gradient across the membrane. The chain is V-type ATP synthase subunit E from Nitrosococcus oceani (strain ATCC 19707 / BCRC 17464 / JCM 30415 / NCIMB 11848 / C-107).